A 342-amino-acid chain; its full sequence is Inactive chitinase-like protein 2 (342 aa).

The first 19 residues, 1 to 19 (MKEIVRALEGYGPPKDKAA), serve as a signal peptide directing secretion. The 41-residue stretch at 20–60 (EQCGWQAGGALCPGGLCCSQYGWCANTPEYCGSGCQSQCDG) folds into the Chitin-binding type-1 domain. 7 cysteine pairs are disulfide-bonded: cysteine 22-cysteine 37, cysteine 31-cysteine 43, cysteine 36-cysteine 80, cysteine 84-cysteine 88, cysteine 122-cysteine 184, cysteine 196-cysteine 204, and cysteine 301-cysteine 333.

It belongs to the glycosyl hydrolase 19 family. Chitinase class I subfamily.

Its function is as follows. Inactive chitinase-like protein that does not exhibit hydrolytic activity toward chitin. Binds strongly to chitin and possesses antifungal activity toward the fungal pathogen Altenaria alternata in plate assays. Probably involved in defense against fungal pathogens through a mechanism that only involves carbohydrate binding. The polypeptide is Inactive chitinase-like protein 2 (Hevea brasiliensis (Para rubber tree)).